Here is a 101-residue protein sequence, read N- to C-terminus: Stefin-C (101 aa).

Position 1 is an N-acetylmethionine (M1). The Secondary area of contact signature appears at 49 to 53 (QVVAG).

Belongs to the cystatin family.

It localises to the cytoplasm. Strong inhibitor of papain and cathepsin L but poor inhibitor of cathepsin B. The polypeptide is Stefin-C (Bos taurus (Bovine)).